The primary structure comprises 624 residues: Anti-CBASS protein Acb1 (624 aa).

Residue Tyr106 coordinates 3',3'-cGAMP. Tyr106 serves as a coordination point for 3',3'-cUAMP. Catalysis depends on residues His503, Thr505, His581, and Thr583. A 3',3'-cGAMP-binding site is contributed by Trp617. Trp617 serves as a coordination point for 3',3'-cUAMP.

It belongs to the anti-CBASS protein Acb1 family.

The catalysed reaction is 3',3'-cUAMP + H2O = U[3'-5']pAp[3'] + H(+). It catalyses the reaction 3',3',3'-c-tri-AMP + H2O = A[3'-5']pA[3'-5']pAp[3'] + H(+). The enzyme catalyses 3',3',3'-cAAG + H2O = G[3'-5']pA[3'-5']pAp[3'] + H(+). It carries out the reaction 3',3',3'-cAAG + H2O = A[3'-5']pG[3'-5']pAp[3'] + H(+). The catalysed reaction is 3',3'-cGAMP + H2O = G[3'-5']pAp[3'] + H(+). Functionally, counteracts or regulates the endogenous CBASS antiviral defense system. Phosphodiesterase that enables metal-independent hydrolysis of the host cyclic di- and trinucleotide CBASS signals such as 3'3'-cGAMP, 3'3'cUA, and 3'3'3'-cAAA. This is Anti-CBASS protein Acb1 from Sphingomonas paeninsulae.